Consider the following 239-residue polypeptide: LexA repressor (239 aa).

A DNA-binding region (H-T-H motif) is located at residues 26-46 (FDEMKDALDLASKSGIHRLIT). Positions 80-108 (RRGFSPSVIEGSLGKPQPAAAPAPAKPVA) are disordered. Catalysis depends on for autocatalytic cleavage activity residues serine 159 and lysine 197.

The protein belongs to the peptidase S24 family. Homodimer.

It carries out the reaction Hydrolysis of Ala-|-Gly bond in repressor LexA.. Its function is as follows. Represses a number of genes involved in the response to DNA damage (SOS response), including recA and lexA. In the presence of single-stranded DNA, RecA interacts with LexA causing an autocatalytic cleavage which disrupts the DNA-binding part of LexA, leading to derepression of the SOS regulon and eventually DNA repair. The polypeptide is LexA repressor (Rhizobium leguminosarum bv. trifolii (strain WSM2304)).